We begin with the raw amino-acid sequence, 346 residues long: Cytochrome c551 peroxidase (346 aa).

Positions Met-1 to Ala-23 are cleaved as a signal peptide. Positions 74, 77, 78, 220, 223, 224, 284, and 298 each coordinate heme c.

It depends on heme c as a cofactor. In terms of processing, binds 2 heme groups per subunit. Sequencing of the whole protein indicates about 20% starts on Val-247.

It localises to the periplasm. It catalyses the reaction 2 Fe(II)-[cytochrome c] + H2O2 + 2 H(+) = 2 Fe(III)-[cytochrome c] + 2 H2O. Catalyzes the peroxidative oxidation of azurin and cytochrome c551. Likely to provide protection against toxic peroxides. This is Cytochrome c551 peroxidase (ccpA) from Pseudomonas aeruginosa (strain ATCC 15692 / DSM 22644 / CIP 104116 / JCM 14847 / LMG 12228 / 1C / PRS 101 / PAO1).